A 273-amino-acid polypeptide reads, in one-letter code: NH(3)-dependent NAD(+) synthetase (273 aa).

An ATP-binding site is contributed by 46-53; that stretch reads GISGGQDS. Aspartate 52 lines the Mg(2+) pocket. Arginine 139 serves as a coordination point for deamido-NAD(+). Residue threonine 159 participates in ATP binding. Position 164 (glutamate 164) interacts with Mg(2+). Lysine 172 and aspartate 179 together coordinate deamido-NAD(+). ATP is bound by residues lysine 188 and threonine 210. Position 259-260 (259-260) interacts with deamido-NAD(+); that stretch reads HK.

It belongs to the NAD synthetase family. Homodimer.

The catalysed reaction is deamido-NAD(+) + NH4(+) + ATP = AMP + diphosphate + NAD(+) + H(+). Its pathway is cofactor biosynthesis; NAD(+) biosynthesis; NAD(+) from deamido-NAD(+) (ammonia route): step 1/1. Functionally, catalyzes the ATP-dependent amidation of deamido-NAD to form NAD. Uses ammonia as a nitrogen source. This is NH(3)-dependent NAD(+) synthetase from Streptococcus agalactiae serotype Ia (strain ATCC 27591 / A909 / CDC SS700).